A 259-amino-acid polypeptide reads, in one-letter code: Transcription factor bHLH125 (259 aa).

The bHLH domain occupies 73 to 125; it reads SKKMKHRDIERQRRQEVSSLFKRLRTLLPFQYIQGKRSTSDHIVQAVNYIKDL.

In terms of assembly, homodimer.

The protein localises to the nucleus. The polypeptide is Transcription factor bHLH125 (BHLH125) (Arabidopsis thaliana (Mouse-ear cress)).